The primary structure comprises 331 residues: DNA fragmentation factor subunit alpha (331 aa).

At Met1 the chain carries N-acetylmethionine. A CIDE-N domain is found at 17-96 (TLKPCLLRRN…ALASNEKWAY (80 aa)). Thr243 is subject to Phosphothreonine. The disordered stretch occupies residues 305-331 (SLRSISASKASPPGDLQNPKRARQDPT). Ser315 is modified (phosphoserine).

Heterodimer of DFFA and DFFB. Caspase-3 cleaves DFF45 at 2 sites to generate an active factor.

It is found in the cytoplasm. In terms of biological role, inhibitor of the caspase-activated DNase (DFF40). This is DNA fragmentation factor subunit alpha (DFFA) from Homo sapiens (Human).